A 245-amino-acid polypeptide reads, in one-letter code: Fumarate reductase iron-sulfur subunit (245 aa).

Residues 17–98 (PQSAVNKPHF…NGVITLMPMP (82 aa)) form the 2Fe-2S ferredoxin-type domain. [2Fe-2S] cluster is bound by residues Cys-60, Cys-65, Cys-68, and Cys-80. The 30-residue stretch at 145 to 174 (AQEVFELDRCIECGCCIASCGTKLMRPNFI) folds into the 4Fe-4S ferredoxin-type domain. 3 residues coordinate [4Fe-4S] cluster: Cys-154, Cys-157, and Cys-160. [3Fe-4S] cluster contacts are provided by Cys-164, Cys-211, and Cys-217. [4Fe-4S] cluster is bound at residue Cys-221.

The protein belongs to the succinate dehydrogenase/fumarate reductase iron-sulfur protein family. Part of an enzyme complex containing three subunits: a flavoprotein (frdA), an iron-sulfur protein (frdB), and diheme cytochrome b (frdC). It depends on [2Fe-2S] cluster as a cofactor. Requires [3Fe-4S] cluster as cofactor. [4Fe-4S] cluster is required as a cofactor.

The catalysed reaction is a menaquinone + succinate = a menaquinol + fumarate. This Helicobacter pylori (strain J99 / ATCC 700824) (Campylobacter pylori J99) protein is Fumarate reductase iron-sulfur subunit (frdB).